A 721-amino-acid chain; its full sequence is Solute carrier family 12 member 8 (721 aa).

Transmembrane regions (helical) follow at residues 53–73 (FGTW…VVLF), 84–104 (GVLL…VTVL), 115–135 (IGSG…VGGT), 136–156 (IGVL…TGFA), 174–194 (ISLA…KWII), 196–216 (LQLL…IGSF), 247–267 (FFTV…GFNM), 283–303 (LAAI…LGAI), 321–341 (LVGG…CMGG), 374–394 (PVAA…IGQV), and 397–417 (LAPI…YSYF). Disordered stretches follow at residues 473–505 (PNHT…KQTL) and 533–580 (NESQ…STVA). Positions 553-565 (TESDEPDSEEDVD) are enriched in acidic residues. Transmembrane regions (helical) follow at residues 606 to 626 (FLGA…YALV) and 628 to 648 (LGVA…LNPG).

The protein belongs to the SLC12A transporter family.

It is found in the membrane. Cation/chloride cotransporter. This chain is Solute carrier family 12 member 8 (slc12a8), found in Xenopus laevis (African clawed frog).